Reading from the N-terminus, the 2073-residue chain is Histone acetyltransferase KAT6B (2073 aa).

The SAMD1-like winged helix (WH) domain maps to M1–P77. Residues K72–G97 are disordered. The 74-residue stretch at R103–Y176 folds into the H15 domain. 2 consecutive PHD-type zinc fingers follow at residues I213–C272 and C269–K320. S355 bears the Phosphoserine mark. 4 disordered regions span residues E360–A409, F442–L531, T553–S583, and V639–D663. The segment at G361 to G717 is negatively regulates HAT activity. Over residues K379–L399 the composition is skewed to polar residues. Over residues D447–K460 the composition is skewed to basic and acidic residues. Residues Q470–Q485 are compositionally biased toward polar residues. Pro residues predominate over residues K488–P499. Residues S501–L531 are compositionally biased toward low complexity. Residue S647 is modified to Phosphoserine. A Glycyl lysine isopeptide (Lys-Gly) (interchain with G-Cter in SUMO2) cross-link involves residue K673. The MYST-type HAT domain occupies D715–P989. Positions R718–A1008 are catalytic. The segment at L748–W773 adopts a C2HC MYST-type zinc-finger fold. The tract at residues E752–A1008 is interaction with BRPF1. K815 bears the N6-acetyllysine; by autocatalysis mark. Residues S856 to I860 and Q865 to R871 each bind acetyl-CoA. The active-site Proton donor/acceptor is E891. Residue S895 participates in acetyl-CoA binding. 3 disordered regions span residues E1022–V1452, S1484–D1538, and Q1580–V1619. The segment covering I1025 to N1043 has biased composition (polar residues). Residues K1038, K1042, and K1044 each carry the N6-acetyllysine modification. Phosphoserine is present on S1048. Residues S1069–N1105 show a composition bias toward acidic residues. Residues I1106–Q1117 show a composition bias toward polar residues. Positions I1121 to I1140 are enriched in basic residues. The segment covering S1142–V1155 has biased composition (low complexity). A compositionally biased stretch (basic residues) spans P1187–K1200. Composition is skewed to basic and acidic residues over residues S1229–K1243, R1306–G1315, and E1341–P1350. Residues E1351–G1374 are compositionally biased toward acidic residues. Basic and acidic residues-rich tracts occupy residues V1378 to K1390 and S1396 to D1407. Residues H1408–E1417 show a composition bias toward acidic residues. Over residues H1433–V1452 the composition is skewed to basic and acidic residues. The segment covering A1498–P1507 has biased composition (acidic residues). Positions Q1513–E1529 are enriched in basic and acidic residues. The tract at residues Q1560–R2073 is interaction with RUNX1 and RUNX2. A compositionally biased stretch (polar residues) spans Q1580–C1591. The span at S1594 to V1611 shows a compositional bias: low complexity.

Belongs to the MYST (SAS/MOZ) family. In terms of assembly, component of the MOZ/MORF complex composed at least of ING5, KAT6A, KAT6B, MEAF6 and one of BRPF1, BRD1/BRPF2 and BRPF3. Interacts with RUNX1 and RUNX2. Post-translationally, autoacetylated. Autoacetylation at Lys-815 is required for proper function. As to expression, ubiquitously expressed, with high levels in heart, pancreas, testis and ovary.

Its subcellular location is the nucleus. The enzyme catalyses L-lysyl-[protein] + acetyl-CoA = N(6)-acetyl-L-lysyl-[protein] + CoA + H(+). Histone acetyltransferase which may be involved in both positive and negative regulation of transcription. Required for RUNX2-dependent transcriptional activation. May be involved in cerebral cortex development. Component of the MOZ/MORF complex which has a histone H3 acetyltransferase activity. In Homo sapiens (Human), this protein is Histone acetyltransferase KAT6B (KAT6B).